Consider the following 554-residue polypeptide: uncharacterized protein (554 aa).

Residues D327 and N328 each contribute to the Ca(2+) site.

Belongs to the sulfatase family. The cofactor is Ca(2+).

The protein resides in the cytoplasm. Its subcellular location is the nucleus. This is an uncharacterized protein from Schizosaccharomyces pombe (strain 972 / ATCC 24843) (Fission yeast).